The sequence spans 421 residues: AP-3 complex subunit mu (421 aa).

One can recognise an MHD domain in the interval 178–420 (QNKIFFDIIE…TTKAGKFQVR (243 aa)).

It belongs to the adaptor complexes medium subunit family. In terms of assembly, adaptor protein complex 3 (AP-3) is a heterotetramer composed of two large adaptins (delta-type subunit and beta-type subunit), a medium adaptin (mu-type subunit) and a small adaptin (sigma-type subunit).

Its subcellular location is the endosome membrane. Part of the AP-3 complex, an adaptor-related complex which is essential for the compartmentalization of the endocytic pathway. The protein is AP-3 complex subunit mu (apm3) of Dictyostelium discoideum (Social amoeba).